Here is a 453-residue protein sequence, read N- to C-terminus: Probable glucan endo-1,3-beta-glucosidase eglC (453 aa).

Positions 1-18 (MQTRQLLALALAVAATEA) are cleaved as a signal peptide. The active-site Proton donor is Glu-128. N-linked (GlcNAc...) asparagine glycosylation occurs at Asn-183. Glu-239 serves as the catalytic Nucleophile. 3 N-linked (GlcNAc...) asparagine glycosylation sites follow: Asn-364, Asn-368, and Asn-376. Residues 370 to 380 (TYPGSWNSTRP) are compositionally biased toward polar residues. A disordered region spans residues 370 to 423 (TYPGSWNSTRPGANGGSSGSSGSSGSSGSSGSSGSSGSGASGHSSSTGSSSFPS). Low complexity-rich tracts occupy residues 389–402 (SSGS…SGSS) and 410–423 (SGHS…SFPS). A lipid anchor (GPI-anchor amidated asparagine) is attached at Asn-430. Residues 431 to 453 (SASGLSGSLFGAVAAVFVALAAL) constitute a propeptide, removed in mature form.

It belongs to the glycosyl hydrolase 17 family. The GPI-anchor is attached to the protein in the endoplasmic reticulum and serves to target the protein to the cell surface. There, the glucosamine-inositol phospholipid moiety is cleaved off and the GPI-modified mannoprotein is covalently attached via its lipidless GPI glycan remnant to the 1,6-beta-glucan of the outer cell wall layer.

It localises to the cell membrane. Its subcellular location is the secreted. The protein localises to the cell wall. The catalysed reaction is Hydrolysis of (1-&gt;3)-beta-D-glucosidic linkages in (1-&gt;3)-beta-D-glucans.. Glucanases play a role in cell expansion during growth, in cell-cell fusion during mating, and in spore release during sporulation. This enzyme may be involved in beta-glucan degradation and also function biosynthetically as a transglycosylase. The sequence is that of Probable glucan endo-1,3-beta-glucosidase eglC (eglC) from Aspergillus clavatus (strain ATCC 1007 / CBS 513.65 / DSM 816 / NCTC 3887 / NRRL 1 / QM 1276 / 107).